A 367-amino-acid chain; its full sequence is Eukaryotic translation initiation factor 3 subunit H (367 aa).

The MPN domain maps to 14-166 (VQVEALVVMK…LRAFRLSPTF (153 aa)).

This sequence belongs to the eIF-3 subunit H family. In terms of assembly, component of the eukaryotic translation initiation factor 3 (eIF-3) complex.

It is found in the cytoplasm. In terms of biological role, component of the eukaryotic translation initiation factor 3 (eIF-3) complex, which is involved in protein synthesis of a specialized repertoire of mRNAs and, together with other initiation factors, stimulates binding of mRNA and methionyl-tRNAi to the 40S ribosome. The eIF-3 complex specifically targets and initiates translation of a subset of mRNAs involved in cell proliferation. This is Eukaryotic translation initiation factor 3 subunit H from Botryotinia fuckeliana (strain B05.10) (Noble rot fungus).